Here is a 179-residue protein sequence, read N- to C-terminus: Replication restart protein DnaT (179 aa).

Residues 156-179 (GGLPKRDVNTVSEPDSQIPPGFRG) form a disordered region.

Belongs to the DnaT family. As to quaternary structure, homooligomerizes. Interacts with PriB. Component of the replication restart primosome. Primosome assembly occurs via a 'hand-off' mechanism. PriA binds to replication forks, subsequently PriB then DnaT bind; DnaT then displaces ssDNA to generate the helicase loading substrate.

In terms of biological role, involved in the restart of stalled replication forks, which reloads the replicative helicase on sites other than the origin of replication. Can function in multiple replication restart pathways. Displaces ssDNA from a PriB-ssDNA complex. Probably forms a spiral filament on ssDNA. The chain is Replication restart protein DnaT from Escherichia coli O17:K52:H18 (strain UMN026 / ExPEC).